A 494-amino-acid polypeptide reads, in one-letter code: UDP-glucose 6-dehydrogenase (494 aa).

NAD(+)-binding positions include 11 to 16 (GAGYVG), Asp36, Arg41, 89 to 93 (VNTPT), and 130 to 132 (STV). The tract at residues 88-110 (SVNTPTKTYGMGKGRAADLKYIE) is disordered. Residues 129-135 (KSTVPVR) form an allosteric switch region region. The Proton donor/acceptor role is filled by Glu161. Substrate is bound by residues 161–165 (EFLAE), 220–224 (KLAAN), Arg260, and 267–273 (KASVGFG). Glu165 is an NAD(+) binding site. Residue Lys220 is the Proton donor/acceptor of the active site. Cys276 serves as the catalytic Nucleophile. 276 to 279 (CFQK) serves as a coordination point for NAD(+). An important for formation of active hexamer structure region spans residues 321–325 (SLFNT). A substrate-binding site is contributed by 338–339 (FK). NAD(+) is bound at residue Arg346. Arg442 provides a ligand contact to substrate. The interval 466 to 494 (VSAKRIPFASSCEIPKFSLQDPPVKKPRV) is disordered.

This sequence belongs to the UDP-glucose/GDP-mannose dehydrogenase family. In terms of assembly, homohexamer.

It catalyses the reaction UDP-alpha-D-glucose + 2 NAD(+) + H2O = UDP-alpha-D-glucuronate + 2 NADH + 3 H(+). It participates in nucleotide-sugar biosynthesis; UDP-alpha-D-glucuronate biosynthesis; UDP-alpha-D-glucuronate from UDP-alpha-D-glucose: step 1/1. Its activity is regulated as follows. UDP-alpha-D-xylose (UDX) acts as a feedback inhibitor. It binds at the same site as the substrate, but functions as allosteric inhibitor by triggering a conformation change that disrupts the active hexameric ring structure and gives rise to an inactive, horseshoe-shaped hexamer. Functionally, catalyzes the formation of UDP-alpha-D-glucuronate, a constituent of complex glycosaminoglycans. Required for the biosynthesis of chondroitin sulfate and heparan sulfate. Required for embryonic development via its role in the biosynthesis of glycosaminoglycans. This Gallus gallus (Chicken) protein is UDP-glucose 6-dehydrogenase (UGDH).